The following is a 216-amino-acid chain: GTP cyclohydrolase-2 (216 aa).

51–55 (RIHSE) contributes to the GTP binding site. Residues Cys-56, Cys-67, and Cys-69 each coordinate Zn(2+). Residues Gln-72, 94–96 (EGR), and Thr-116 each bind GTP. The active-site Proton acceptor is Asp-128. The active-site Nucleophile is the Arg-130. GTP-binding residues include Thr-151 and Lys-156.

It belongs to the GTP cyclohydrolase II family. Zn(2+) is required as a cofactor.

The enzyme catalyses GTP + 4 H2O = 2,5-diamino-6-hydroxy-4-(5-phosphoribosylamino)-pyrimidine + formate + 2 phosphate + 3 H(+). The protein operates within cofactor biosynthesis; riboflavin biosynthesis; 5-amino-6-(D-ribitylamino)uracil from GTP: step 1/4. Its function is as follows. Catalyzes the conversion of GTP to 2,5-diamino-6-ribosylamino-4(3H)-pyrimidinone 5'-phosphate (DARP), formate and pyrophosphate. The sequence is that of GTP cyclohydrolase-2 from Haemophilus influenzae (strain PittEE).